A 217-amino-acid polypeptide reads, in one-letter code: MKRQSALVVFSGGQDSTTCLFWALKHYETVELVTFAYGQRHSLEIEVAKEIAQEQGLKHHVLDMSLLGQITENALTSDIEIEAEKGEVPNTFVDGRNHLFLSFAAVLAKQRGIIDIVTGVCETDFSGYPDCRDVFVKSLNVTLNLAMAYDFVIQTPLMWLDKAETWALADQLGAFDYVREKTLTCYNGIIGTGCGDCPACHLRQKGLEKYLAEKGDA.

Position 10 to 20 (10 to 20 (FSGGQDSTTCL)) interacts with ATP. The Zn(2+) site is built by Cys-185, Cys-194, Cys-197, and Cys-200.

It belongs to the QueC family. In terms of assembly, homodimer. Zn(2+) serves as cofactor.

It catalyses the reaction 7-carboxy-7-deazaguanine + NH4(+) + ATP = 7-cyano-7-deazaguanine + ADP + phosphate + H2O + H(+). Its pathway is purine metabolism; 7-cyano-7-deazaguanine biosynthesis. Functionally, catalyzes the ATP-dependent conversion of 7-carboxy-7-deazaguanine (CDG) to 7-cyano-7-deazaguanine (preQ(0)). The polypeptide is 7-cyano-7-deazaguanine synthase (Streptococcus thermophilus (strain CNRZ 1066)).